Reading from the N-terminus, the 158-residue chain is Scytalone dehydratase-like protein CPUR_05428 (158 aa).

Positions 24 and 44 each coordinate substrate. Residues histidine 79 and histidine 104 contribute to the active site.

It belongs to the scytalone dehydratase family.

The protein operates within pigment biosynthesis. Its function is as follows. Scytalone dehydratase-like protein; part of the ergochrome gene cluster responsible for the typical purple-black color of the ergot sclerotia. The ergochrome gene cluster produces several ergot pigments including the yellow ergochrome secalonic acid and its derivatives, as well as the red anthraquinones endocrocin and clavorubin. The pathway begins with the synthesis of atrochrysone thioester by the polyketide synthase (PKS) CPUR_05437. The atrochrysone carboxyl ACP thioesterase CPUR_05436 then breaks the thioester bond and releases the atrochrysone carboxylic acid from CPUR_05437. The atrochrysone carboxylic acid is then converted to atrochrysone which is further transformed into emodin anthrone. The next step is performed by the anthrone oxygenase CPUR_05434 that catalyzes the oxidation of emodinanthrone to emodin. Emodin is further modified to yield monodictyphenone via several steps involving CPUR_05427, CPUR_05428, CPUR_05429 and CPUR_05430. The short chain dehydrogenase/reductase CPUR_05418 then catalyzes the C-5 ketoreduction to give the xanthone skeleton of the monomeric units. Ergochromes formation requires further dimerization steps of different xanthone units, probably catalyzed by the cytochrome P450 monooxygenase CPUR_05419. CPUR_05425, CPUR_05426 and CPUR_05431 are unique to Claviceps, thus it is likely that they are involved in further modification of xanthone units or in their dimerization. The yellow ergochromes and the red anthraquinone pigments endocrocin and clavorubin are products from the same PKS derived precursors and the latter are likely shunt products in the pathway of xanthone biosynthesis. It is proposed that atrochrysone carboxylic acid released from the PKS CPUR_05437 can also be converted to endocrocin anthrone which is further oxidized into endocrocin by CPUR_05435. Endocrocin could be then modified to clavorubin, possibly by CPUR_05423 and CPUR_05431. Clavorubin is the principal anthraquinone metabolite produced by the cluster with a much higher yield compared to endocrocin. The sequence is that of Scytalone dehydratase-like protein CPUR_05428 from Claviceps purpurea (strain 20.1) (Ergot fungus).